The sequence spans 288 residues: MKFLLAFSLLIPSVVFASSSKFQQVEQDVKAIEVSLSARIGVSVLDTQNGEYWDYNGNQRFPLTSTFKTIACAKLLYDAEQGKVNPNSTVEIKKADLVTYSPVIEKQVGQAITLDDACFATMTTSDNTAANIILSAVGGPKGVTDFLRQIGDKETRLDRIEPDLNEGKLGDLRDTTTPKAIASTLNKFLFGSALSEMNQKKLESWMVNNQVTGNLLRSVLPAGWNIADRSGAGGFGARSITAVVWSEHQAPIIVSIYLAQTQASMAERNDAIVKIGHSIFDVYTSQSR.

Residues 1–17 (MKFLLAFSLLIPSVVFA) form the signal peptide. The Acyl-ester intermediate role is filled by Ser65. Residues Cys72 and Cys118 are joined by a disulfide bond. 229 to 231 (RSG) contributes to the substrate binding site.

Belongs to the class-A beta-lactamase family. Monomer.

The catalysed reaction is a beta-lactam + H2O = a substituted beta-amino acid. With respect to regulation, inhibited by p-chloromercuribenzoate but not by cloxacillin. Functionally, hydrolyzes penicillin, ampicillin and carbenicillin but not other antibiotics including oxacillin, methicillin and cloxacillin. This chain is Beta-lactamase PSE-1, found in Pseudomonas aeruginosa.